Here is a 151-residue protein sequence, read N- to C-terminus: Abdominal ganglion neuropeptide L11 (151 aa).

A signal peptide spans 1–25 (MPCTPNSHRLLLVTALCLLITSLFA).

The protein resides in the secreted. The sequence is that of Abdominal ganglion neuropeptide L11 from Aplysia californica (California sea hare).